Reading from the N-terminus, the 445-residue chain is Proton extrusion protein PxcA (445 aa).

The next 4 membrane-spanning stretches (helical) occupy residues 227–247 (FILLLIIVPLLTQQLTKTFLI), 322–342 (AIANIFADICSLIAFGFVVAF), 369–389 (LIILFTDIFVGFHSPHGWEVI), and 405–425 (FNFLFIATFPVILDTVLKYWI).

It belongs to the CemA family.

It is found in the cell inner membrane. Its function is as follows. Required for H(+) efflux immediately after light irradiation to form a rapid H(+) concentration gradient across the thylakoid membranes. Together with PxcL, contributes to transient H(+) uptake following dark to light transition. This is Proton extrusion protein PxcA from Microcystis aeruginosa (strain NIES-843 / IAM M-2473).